The following is a 471-amino-acid chain: ATP synthase subunit beta (471 aa).

154 to 161 (GGAGVGKT) provides a ligand contact to ATP.

The protein belongs to the ATPase alpha/beta chains family. In terms of assembly, F-type ATPases have 2 components, CF(1) - the catalytic core - and CF(0) - the membrane proton channel. CF(1) has five subunits: alpha(3), beta(3), gamma(1), delta(1), epsilon(1). CF(0) has three main subunits: a(1), b(2) and c(9-12). The alpha and beta chains form an alternating ring which encloses part of the gamma chain. CF(1) is attached to CF(0) by a central stalk formed by the gamma and epsilon chains, while a peripheral stalk is formed by the delta and b chains.

The protein localises to the cell membrane. The catalysed reaction is ATP + H2O + 4 H(+)(in) = ADP + phosphate + 5 H(+)(out). Its function is as follows. Produces ATP from ADP in the presence of a proton gradient across the membrane. The catalytic sites are hosted primarily by the beta subunits. This is ATP synthase subunit beta from Mesomycoplasma hyopneumoniae (strain 232) (Mycoplasma hyopneumoniae).